Consider the following 339-residue polypeptide: Adenylosuccinate synthetase (339 aa).

GTP contacts are provided by residues 12-18 and 42-44; these read GDEGKGS and GHS. The active-site Proton acceptor is the Asp13. Asp13 and Gly42 together coordinate Mg(2+). IMP is bound by residues 13 to 16, 40 to 43, Thr127, Arg141, Gln179, Thr194, and Arg256; these read DEGK and NAGH. Catalysis depends on His43, which acts as the Proton donor. Residue 252 to 258 coordinates substrate; the sequence is TVTGRRR. Residues Arg258, 284–286, and 324–326 each bind GTP; these read MLD and KTG.

This sequence belongs to the adenylosuccinate synthetase family. As to quaternary structure, homodimer. Mg(2+) serves as cofactor.

It localises to the cytoplasm. The catalysed reaction is IMP + L-aspartate + GTP = N(6)-(1,2-dicarboxyethyl)-AMP + GDP + phosphate + 2 H(+). It functions in the pathway purine metabolism; AMP biosynthesis via de novo pathway; AMP from IMP: step 1/2. Plays an important role in the de novo pathway of purine nucleotide biosynthesis. Catalyzes the first committed step in the biosynthesis of AMP from IMP. This Thermococcus onnurineus (strain NA1) protein is Adenylosuccinate synthetase.